We begin with the raw amino-acid sequence, 540 residues long: Phosphoenolpyruvate carboxykinase (ATP) (540 aa).

Substrate is bound by residues R67, Y207, and K213. ATP contacts are provided by residues K213, H232, and 248–256 (GLSGTGKTT). The Mn(2+) site is built by K213 and H232. D269 provides a ligand contact to Mn(2+). ATP contacts are provided by residues E297, R333, 449 to 450 (RI), and T455. R333 contacts substrate.

Belongs to the phosphoenolpyruvate carboxykinase (ATP) family. Monomer. It depends on Mn(2+) as a cofactor.

The protein localises to the cytoplasm. It carries out the reaction oxaloacetate + ATP = phosphoenolpyruvate + ADP + CO2. The protein operates within carbohydrate biosynthesis; gluconeogenesis. Its function is as follows. Involved in the gluconeogenesis. Catalyzes the conversion of oxaloacetate (OAA) to phosphoenolpyruvate (PEP) through direct phosphoryl transfer between the nucleoside triphosphate and OAA. The polypeptide is Phosphoenolpyruvate carboxykinase (ATP) (Aliivibrio fischeri (strain MJ11) (Vibrio fischeri)).